A 379-amino-acid polypeptide reads, in one-letter code: UDP-N-acetylglucosamine--N-acetylmuramyl-(pentapeptide) pyrophosphoryl-undecaprenol N-acetylglucosamine transferase (379 aa).

Residues 17–19, N128, R169, S197, and Q298 contribute to the UDP-N-acetyl-alpha-D-glucosamine site; that span reads TGG.

Belongs to the glycosyltransferase 28 family. MurG subfamily.

It is found in the cell inner membrane. It catalyses the reaction di-trans,octa-cis-undecaprenyl diphospho-N-acetyl-alpha-D-muramoyl-L-alanyl-D-glutamyl-meso-2,6-diaminopimeloyl-D-alanyl-D-alanine + UDP-N-acetyl-alpha-D-glucosamine = di-trans,octa-cis-undecaprenyl diphospho-[N-acetyl-alpha-D-glucosaminyl-(1-&gt;4)]-N-acetyl-alpha-D-muramoyl-L-alanyl-D-glutamyl-meso-2,6-diaminopimeloyl-D-alanyl-D-alanine + UDP + H(+). The protein operates within cell wall biogenesis; peptidoglycan biosynthesis. Its function is as follows. Cell wall formation. Catalyzes the transfer of a GlcNAc subunit on undecaprenyl-pyrophosphoryl-MurNAc-pentapeptide (lipid intermediate I) to form undecaprenyl-pyrophosphoryl-MurNAc-(pentapeptide)GlcNAc (lipid intermediate II). The protein is UDP-N-acetylglucosamine--N-acetylmuramyl-(pentapeptide) pyrophosphoryl-undecaprenol N-acetylglucosamine transferase of Brucella suis (strain ATCC 23445 / NCTC 10510).